The primary structure comprises 100 residues: Urease subunit gamma (100 aa).

Belongs to the urease gamma subunit family. Heterotrimer of UreA (gamma), UreB (beta) and UreC (alpha) subunits. Three heterotrimers associate to form the active enzyme.

It localises to the cytoplasm. The enzyme catalyses urea + 2 H2O + H(+) = hydrogencarbonate + 2 NH4(+). The protein operates within nitrogen metabolism; urea degradation; CO(2) and NH(3) from urea (urease route): step 1/1. The sequence is that of Urease subunit gamma from Paenarthrobacter aurescens (strain TC1).